The following is a 309-amino-acid chain: Manganese ABC transporter substrate-binding lipoprotein PsaA (309 aa).

Residues 1-19 form the signal peptide; sequence MKKLGTLFVLFLSVIVLVA. Cysteine 20 is lipidated: N-palmitoyl cysteine. A lipid anchor (S-diacylglycerol cysteine) is attached at cysteine 20. 4 residues coordinate Mn(2+): histidine 67, histidine 139, glutamate 205, and aspartate 280.

This sequence belongs to the bacterial solute-binding protein 9 family. Lipoprotein receptor antigen (Lrai) subfamily.

The protein resides in the cell membrane. In terms of biological role, part of the ATP-riven (ABC) transport system PsaABC involved in manganese import. Binds manganese with high affinity and specificity and delivers it to the membrane permease for translocation into the cytoplasm. Also acts as an adhesin which is involved on adherence to extracellular matrix. This Streptococcus mitis protein is Manganese ABC transporter substrate-binding lipoprotein PsaA (psaA).